A 367-amino-acid chain; its full sequence is Putative S-adenosyl-L-methionine-dependent methyltransferase MT0751 (367 aa).

Residues Asp-137 and 166 to 167 contribute to the S-adenosyl-L-methionine site; that span reads DL. Residues 348–358 are compositionally biased toward polar residues; sequence TRSDAHQASTT. The disordered stretch occupies residues 348 to 367; that stretch reads TRSDAHQASTTAPPPPGLTG.

It belongs to the UPF0677 family.

In terms of biological role, exhibits S-adenosyl-L-methionine-dependent methyltransferase activity. The chain is Putative S-adenosyl-L-methionine-dependent methyltransferase MT0751 from Mycobacterium tuberculosis (strain CDC 1551 / Oshkosh).